Reading from the N-terminus, the 254-residue chain is 3-deoxy-manno-octulosonate cytidylyltransferase (254 aa).

This sequence belongs to the KdsB family.

Its subcellular location is the cytoplasm. It carries out the reaction 3-deoxy-alpha-D-manno-oct-2-ulosonate + CTP = CMP-3-deoxy-beta-D-manno-octulosonate + diphosphate. It participates in nucleotide-sugar biosynthesis; CMP-3-deoxy-D-manno-octulosonate biosynthesis; CMP-3-deoxy-D-manno-octulosonate from 3-deoxy-D-manno-octulosonate and CTP: step 1/1. Its pathway is bacterial outer membrane biogenesis; lipopolysaccharide biosynthesis. Activates KDO (a required 8-carbon sugar) for incorporation into bacterial lipopolysaccharide in Gram-negative bacteria. The polypeptide is 3-deoxy-manno-octulosonate cytidylyltransferase (Bordetella bronchiseptica (strain ATCC BAA-588 / NCTC 13252 / RB50) (Alcaligenes bronchisepticus)).